The chain runs to 240 residues: Putative outer membrane protein RT0057 (240 aa).

An N-terminal signal peptide occupies residues 1-20; the sequence is MLKKLCVILFISSITINSHA.

It belongs to the OmpW/AlkL family.

Its subcellular location is the cell outer membrane. The chain is Putative outer membrane protein RT0057 from Rickettsia typhi (strain ATCC VR-144 / Wilmington).